Here is a 492-residue protein sequence, read N- to C-terminus: Stomatal closure-related actin-binding protein 2 (492 aa).

A coiled-coil region spans residues 112-132; the sequence is LKKLRDALETMRGRMDGRNRE.

Belongs to the SCAB family. In terms of tissue distribution, expressed in roots, stems, leaves, siliques and flowers.

Its subcellular location is the cytoplasm. It localises to the cytoskeleton. In terms of biological role, probable plant-specific actin binding protein that bundles and stabilizes microfilaments (MFs). The sequence is that of Stomatal closure-related actin-binding protein 2 from Arabidopsis thaliana (Mouse-ear cress).